A 347-amino-acid polypeptide reads, in one-letter code: MKNILDFTLEELKEWMKENGESAFRAKQIFDWIYKKEVFNFEEMKNISKALIGKLSENFYIGIPEVIDYLSSSEDGTRKILLGLGDGNIIECVIMRYKYGNSICVSTQIGCRMGCKFCASTLEGMVRNLTAGEILSEVLIGQKLLGERISNIVLMGSGEPLDNYDNVMKFLELVNADYGLNIGQRHITLSTCGLVPKIREMADKEMQVTLAISLHAVSDEKRKTIMPIANKYSISEILDACNYYIEKTGRRITFEYSLVSGVNDTKEDAKSLGRLLKGMLCHVNLIPVNEIKENEFKKSTKKDIETFLNTLKTYGVEATVRREMGSDINAACGQLRRSYIKSKGLKL.

Catalysis depends on Glu-91, which acts as the Proton acceptor. In terms of domain architecture, Radical SAM core spans 97–327 (YKYGNSICVS…ATVRREMGSD (231 aa)). Cys-104 and Cys-332 form a disulfide bridge. The [4Fe-4S] cluster site is built by Cys-111, Cys-115, and Cys-118. S-adenosyl-L-methionine contacts are provided by residues 158 to 159 (GE), Ser-190, 213 to 215 (SLH), and Asn-289. Cys-332 serves as the catalytic S-methylcysteine intermediate.

This sequence belongs to the radical SAM superfamily. RlmN family. It depends on [4Fe-4S] cluster as a cofactor.

It is found in the cytoplasm. It catalyses the reaction adenosine(2503) in 23S rRNA + 2 reduced [2Fe-2S]-[ferredoxin] + 2 S-adenosyl-L-methionine = 2-methyladenosine(2503) in 23S rRNA + 5'-deoxyadenosine + L-methionine + 2 oxidized [2Fe-2S]-[ferredoxin] + S-adenosyl-L-homocysteine. The enzyme catalyses adenosine(37) in tRNA + 2 reduced [2Fe-2S]-[ferredoxin] + 2 S-adenosyl-L-methionine = 2-methyladenosine(37) in tRNA + 5'-deoxyadenosine + L-methionine + 2 oxidized [2Fe-2S]-[ferredoxin] + S-adenosyl-L-homocysteine. Its function is as follows. Specifically methylates position 2 of adenine 2503 in 23S rRNA and position 2 of adenine 37 in tRNAs. This is Probable dual-specificity RNA methyltransferase RlmN from Clostridium perfringens (strain 13 / Type A).